Here is a 93-residue protein sequence, read N- to C-terminus: Small ribosomal subunit protein uS19 (93 aa).

It belongs to the universal ribosomal protein uS19 family.

In terms of biological role, protein S19 forms a complex with S13 that binds strongly to the 16S ribosomal RNA. This Dehalococcoides mccartyi (strain ATCC BAA-2266 / KCTC 15142 / 195) (Dehalococcoides ethenogenes (strain 195)) protein is Small ribosomal subunit protein uS19.